A 271-amino-acid polypeptide reads, in one-letter code: 2-dehydro-3-deoxyphosphooctonate aldolase (271 aa).

This sequence belongs to the KdsA family.

The protein resides in the cytoplasm. It catalyses the reaction D-arabinose 5-phosphate + phosphoenolpyruvate + H2O = 3-deoxy-alpha-D-manno-2-octulosonate-8-phosphate + phosphate. It functions in the pathway carbohydrate biosynthesis; 3-deoxy-D-manno-octulosonate biosynthesis; 3-deoxy-D-manno-octulosonate from D-ribulose 5-phosphate: step 2/3. It participates in bacterial outer membrane biogenesis; lipopolysaccharide biosynthesis. The protein is 2-dehydro-3-deoxyphosphooctonate aldolase of Campylobacter jejuni subsp. jejuni serotype O:2 (strain ATCC 700819 / NCTC 11168).